The following is a 292-amino-acid chain: Undecaprenyl-diphosphatase (292 aa).

The next 7 membrane-spanning stretches (helical) occupy residues Met-1–Val-21, Phe-46–Ile-66, Leu-90–His-110, Ala-114–Ala-134, Phe-192–Pro-212, Val-225–Trp-245, and Val-253–Val-273.

Belongs to the UppP family.

The protein localises to the cell inner membrane. It catalyses the reaction di-trans,octa-cis-undecaprenyl diphosphate + H2O = di-trans,octa-cis-undecaprenyl phosphate + phosphate + H(+). Catalyzes the dephosphorylation of undecaprenyl diphosphate (UPP). Confers resistance to bacitracin. This chain is Undecaprenyl-diphosphatase, found in Anaeromyxobacter sp. (strain K).